Consider the following 776-residue polypeptide: Acetone carboxylase alpha subunit (776 aa).

As to quaternary structure, heterohexamer of two alpha, two beta and two gamma subunits. The cofactor is Fe cation. Mg(2+) is required as a cofactor. Zn(2+) serves as cofactor. Post-translationally, the N-terminus is blocked.

It carries out the reaction acetone + hydrogencarbonate + 2 ATP + 3 H2O = acetoacetate + 2 AMP + 4 phosphate + 4 H(+). In terms of biological role, catalyzes the carboxylation of acetone to form acetoacetate. Has a reduced activity on butanone, and no activity on 2-pentatone, 3-pentatone, 2-hexanone, chloroacetone, pyruvate, phosphoenolpyruvate, acetaldehyde, propionaldehyde and propylene oxide. This chain is Acetone carboxylase alpha subunit, found in Xanthobacter autotrophicus (strain ATCC BAA-1158 / Py2).